The chain runs to 825 residues: Endochitinase A1 (825 aa).

An N-terminal signal peptide occupies residues 1–22; that stretch reads MVSSKLSFVATAVAALAPLASA. The GH18 domain occupies 29 to 338; that stretch reads SNLAIYWGQG…DHMKDILLHC (310 aa). E174 acts as the Proton donor in catalysis. 3 disordered regions span residues 338-568, 680-736, and 750-792; these read CDPS…TTTA, PVTE…VSTS, and PLIL…YTQE. Over residues 344 to 554 the composition is skewed to low complexity; sequence VTSSSAVPSS…STDESSTTVG (211 aa). N559 carries N-linked (GlcNAc...) asparagine glycosylation. Polar residues predominate over residues 701–712; sequence EGSNPTQPSGAS. N717 carries an N-linked (GlcNAc...) asparagine glycan. Residues 772-792 show a composition bias toward polar residues; the sequence is PSGQNSGSSSHVPIPPSYTQE. Residue G800 is the site of GPI-anchor amidated glycine attachment. Positions 801–825 are cleaved as a propeptide — removed in mature form; the sequence is AASRVTGLGHGLVLTVLTLSAFFVL.

Belongs to the glycosyl hydrolase 18 family. Chitinase class III subfamily. Post-translationally, O-mannosylated by pmt4.

The protein resides in the cell membrane. The protein localises to the secreted. Its subcellular location is the cell wall. The catalysed reaction is Random endo-hydrolysis of N-acetyl-beta-D-glucosaminide (1-&gt;4)-beta-linkages in chitin and chitodextrins.. With respect to regulation, the cyclic peptide natural product argifin acts as a specific inhibitor. Functionally, GPI-anchored chitinase involved in the degradation of chitin, a component of the cell walls of fungi and exoskeletal elements of some animals (including worms and arthropods). Required to reshape the cell wall at the sites where cell wall remodeling and/or cell wall maturation actively take place such as sites of conidia formation. This chain is Endochitinase A1 (chiA1), found in Aspergillus fumigatus (Neosartorya fumigata).